Reading from the N-terminus, the 423-residue chain is Amino acid transporter AVT1J (423 aa).

11 consecutive transmembrane segments (helical) span residues 39-59 (CFHGINALSGVGILSVPYALA), 63-83 (WLSLIILFTVAITTFYCAILI), 110-130 (VIVSIFMNLELYLVATSFLIL), 151-171 (FQGKQMFIIMVALIILPSVWL), 186-206 (FASGVILASIFSVGAFEGVGF), 219-239 (VATSVSLYAFCYCAHPVFPTL), 252-272 (VMIICFTICTFIYASVAVLGY), 297-317 (AIWTTLVNPIAKFALMVTPII), 333-355 (ASGFLLSTILVTSNVIVALLLPF), 359-381 (LMSLVGAFLSASASVILPCLCYL), and 390-410 (LGFETLVLIGITLTGIVVVIT).

The protein belongs to the amino acid/polyamine transporter 2 family. Amino acid/auxin permease (AAAP) (TC 2.A.18.5) subfamily.

It is found in the membrane. This is Amino acid transporter AVT1J from Arabidopsis thaliana (Mouse-ear cress).